Consider the following 1003-residue polypeptide: cGMP-dependent protein kinase (1003 aa).

Residues 1–141 (MGACSSKAQH…KAIKQQEDTQ (141 aa)) form a disordered region. Residue Gly2 is the site of N-myristoyl glycine attachment. A lipid anchor (S-palmitoyl cysteine) is attached at Cys4. The segment covering 69–85 (EQQQQQQQQQQQQQEQQ) has biased composition (low complexity). 2 stretches are compositionally biased toward basic and acidic residues: residues 86-109 (QHPE…ERKP) and 127-141 (ERKV…EDTQ). 4 cNMP-binding domain regions span residues 173-289 (VCSS…FLAS), 292-391 (FFEM…RVLG), 411-548 (VFAS…ATLG), and 570-669 (IFRY…LQIV). Residues Gly237, Glu238, Arg247, and Thr248 each contribute to the 3',5'-cyclic GMP site. Positions 625, 634, 635, 637, 644, and 645 each coordinate 3',5'-cyclic GMP. The 258-residue stretch at 693–950 (LNVVRVVGRG…YKDIKEHAFF (258 aa)) folds into the Protein kinase domain. Residues 699-707 (VGRGTFGTV) and Lys722 contribute to the ATP site. The Proton acceptor role is filled by Asp816. Residues 951-1003 (SDFDWDRLAGRDLSPPLLPKGEIYAEDAEEGGLDIEEDEGIELEDEYEWDKDF) form the AGC-kinase C-terminal domain.

It belongs to the protein kinase superfamily. AGC Ser/Thr protein kinase family. cGMP subfamily. As to quaternary structure, monomer. The cofactor is Mg(2+).

It localises to the cell membrane. The protein resides in the cytoplasm. The catalysed reaction is L-seryl-[protein] + ATP = O-phospho-L-seryl-[protein] + ADP + H(+). It carries out the reaction L-threonyl-[protein] + ATP = O-phospho-L-threonyl-[protein] + ADP + H(+). Its activity is regulated as follows. Activated by cGMP. The cGMP-binding domains acts cooperatively to activate PKG. Inhibited by the antiparasitic small molecule 4-[2-(4-fluorophenyl)-5-(1-methylpiperidine-4-yl)-1Hpyrrol- 3-yl]pyridine (compound 1). Functionally, serine/threonine protein kinase which acts as a downstream effector of the second messenger cGMP. In Eimeria tenella (Coccidian parasite), this protein is cGMP-dependent protein kinase.